The chain runs to 201 residues: Translation initiation factor IF-3 (201 aa).

Residues 167-201 are disordered; sequence PHRGAKTRARARHPGEPAGGPPPKPTAGDSKAAPN. Positions 169–178 are enriched in basic residues; that stretch reads RGAKTRARAR.

It belongs to the IF-3 family. As to quaternary structure, monomer.

The protein resides in the cytoplasm. IF-3 binds to the 30S ribosomal subunit and shifts the equilibrium between 70S ribosomes and their 50S and 30S subunits in favor of the free subunits, thus enhancing the availability of 30S subunits on which protein synthesis initiation begins. The protein is Translation initiation factor IF-3 of Mycobacterium bovis (strain ATCC BAA-935 / AF2122/97).